A 481-amino-acid chain; its full sequence is Trichosetin biosynthesis cluster MFS transporter (481 aa).

The span at M1–Q13 shows a compositional bias: polar residues. The tract at residues M1–L63 is disordered. A compositionally biased stretch (basic and acidic residues) spans G20–E31. N-linked (GlcNAc...) asparagine glycosylation is present at N64. A helical transmembrane segment spans residues L72–A92. A glycan (N-linked (GlcNAc...) asparagine) is linked at N103. Helical transmembrane passes span A111–L131, V147–F167, I169–L189, A200–V220, and W228–M248. N252 carries N-linked (GlcNAc...) asparagine glycosylation. 5 helical membrane-spanning segments follow: residues P302 to F322, L353 to T373, W380 to P400, I403 to L423, and G446 to F466.

The protein belongs to the major facilitator superfamily.

The protein localises to the cell membrane. In terms of biological role, efflux pump required for efficient secretion of trichosetin or other secondary metabolies produced by the trichosetin gene cluster. Plays a crucial role in detoxification of the toxic trichosetin in Gibberella fujikuroi cells. In Gibberella fujikuroi (strain CBS 195.34 / IMI 58289 / NRRL A-6831) (Bakanae and foot rot disease fungus), this protein is Trichosetin biosynthesis cluster MFS transporter.